The primary structure comprises 227 residues: Cytidylate kinase (227 aa).

Gly12–Thr20 contacts ATP.

This sequence belongs to the cytidylate kinase family. Type 1 subfamily.

Its subcellular location is the cytoplasm. The enzyme catalyses CMP + ATP = CDP + ADP. The catalysed reaction is dCMP + ATP = dCDP + ADP. This Shigella boydii serotype 18 (strain CDC 3083-94 / BS512) protein is Cytidylate kinase.